Reading from the N-terminus, the 194-residue chain is Peptidyl-tRNA hydrolase (194 aa).

Y17 serves as a coordination point for tRNA. The active-site Proton acceptor is H22. 3 residues coordinate tRNA: F68, N70, and N116.

This sequence belongs to the PTH family. In terms of assembly, monomer.

The protein localises to the cytoplasm. The enzyme catalyses an N-acyl-L-alpha-aminoacyl-tRNA + H2O = an N-acyl-L-amino acid + a tRNA + H(+). Its function is as follows. Hydrolyzes ribosome-free peptidyl-tRNAs (with 1 or more amino acids incorporated), which drop off the ribosome during protein synthesis, or as a result of ribosome stalling. In terms of biological role, catalyzes the release of premature peptidyl moieties from peptidyl-tRNA molecules trapped in stalled 50S ribosomal subunits, and thus maintains levels of free tRNAs and 50S ribosomes. This Haemophilus ducreyi (strain 35000HP / ATCC 700724) protein is Peptidyl-tRNA hydrolase.